The following is a 95-amino-acid chain: Aspartyl/glutamyl-tRNA(Asn/Gln) amidotransferase subunit C (95 aa).

The protein belongs to the GatC family. In terms of assembly, heterotrimer of A, B and C subunits.

The catalysed reaction is L-glutamyl-tRNA(Gln) + L-glutamine + ATP + H2O = L-glutaminyl-tRNA(Gln) + L-glutamate + ADP + phosphate + H(+). It catalyses the reaction L-aspartyl-tRNA(Asn) + L-glutamine + ATP + H2O = L-asparaginyl-tRNA(Asn) + L-glutamate + ADP + phosphate + 2 H(+). In terms of biological role, allows the formation of correctly charged Asn-tRNA(Asn) or Gln-tRNA(Gln) through the transamidation of misacylated Asp-tRNA(Asn) or Glu-tRNA(Gln) in organisms which lack either or both of asparaginyl-tRNA or glutaminyl-tRNA synthetases. The reaction takes place in the presence of glutamine and ATP through an activated phospho-Asp-tRNA(Asn) or phospho-Glu-tRNA(Gln). The polypeptide is Aspartyl/glutamyl-tRNA(Asn/Gln) amidotransferase subunit C (Nitrosococcus oceani (strain ATCC 19707 / BCRC 17464 / JCM 30415 / NCIMB 11848 / C-107)).